A 169-amino-acid polypeptide reads, in one-letter code: Diuretic hormone 44 (169 aa).

Residues 1-18 (MILLGILASTTIIGLTSS) form the signal peptide. Positions 19–96 (APLSSYERRD…ARRKQERDQR (78 aa)) are excised as a propeptide. The stretch at 83 to 108 (MLELARRKQERDQRQIEENRRFLENI) forms a coiled coil. The residue at position 97 (glutamine 97) is a Pyrrolidone carboxylic acid. Isoleucine 108 carries the post-translational modification Isoleucine amide. The propeptide occupies 109–169 (GKRSVPVSDA…RVQANELRLL (61 aa)).

In terms of processing, residues Ile-66 to Gly-109 may constitute another form of the DH44 peptide, which has not been detected yet. As to expression, expressed in brain, ventral ganglia and the retrocerebral complex (at protein level).

The protein localises to the secreted. Functionally, regulation of fluid secretion. The chain is Diuretic hormone 44 from Camponotus floridanus (Florida carpenter ant).